The chain runs to 284 residues: Sulfotransferase 2A1 (284 aa).

6 residues coordinate 3'-phosphoadenylyl sulfate: lysine 43, serine 44, glycine 45, threonine 46, asparagine 47, and tryptophan 48. Histidine 98 acts as the Proton acceptor in catalysis. 3'-phosphoadenylyl sulfate contacts are provided by arginine 120, serine 128, tyrosine 183, serine 217, methionine 222, arginine 246, lysine 247, and glycine 248.

It belongs to the sulfotransferase 1 family. In terms of assembly, homodimer.

It localises to the cytoplasm. It catalyses the reaction an alcohol + 3'-phosphoadenylyl sulfate = an alkyl sulfate + adenosine 3',5'-bisphosphate + H(+). The catalysed reaction is taurolithocholate + 3'-phosphoadenylyl sulfate = taurolithocholate 3-sulfate + adenosine 3',5'-bisphosphate + H(+). It carries out the reaction lithocholate + 3'-phosphoadenylyl sulfate = lithocholate sulfate + adenosine 3',5'-bisphosphate + H(+). The enzyme catalyses (24S)-hydroxycholesterol + 3'-phosphoadenylyl sulfate = (24S)-hydroxycholesterol 24-sulfate + adenosine 3',5'-bisphosphate + H(+). It catalyses the reaction (24S)-hydroxycholesterol + 3'-phosphoadenylyl sulfate = (24S)-hydroxycholesterol 3-sulfate + adenosine 3',5'-bisphosphate + H(+). The catalysed reaction is (24S)-hydroxycholesterol 24-sulfate + 3'-phosphoadenylyl sulfate = (24S)-hydroxycholesterol 3,24-disulfate + adenosine 3',5'-bisphosphate + H(+). It carries out the reaction 3beta-hydroxyandrost-5-en-17-one + 3'-phosphoadenylyl sulfate = dehydroepiandrosterone 3-sulfate + adenosine 3',5'-bisphosphate + H(+). The enzyme catalyses pregnenolone + 3'-phosphoadenylyl sulfate = pregnenolone sulfate + adenosine 3',5'-bisphosphate + H(+). It catalyses the reaction androsterone + 3'-phosphoadenylyl sulfate = androsterone 3alpha-sulfate + adenosine 3',5'-bisphosphate + H(+). Functionally, sulfotransferase that utilizes 3'-phospho-5'-adenylyl sulfate (PAPS) as sulfonate donor to catalyze the sulfonation of steroids and bile acids in the liver and adrenal glands. Mediates the sulfation of a wide range of steroids and sterols, including pregnenolone, androsterone, DHEA, bile acids, cholesterol and as well many xenobiotics that contain alcohol and phenol functional groups. Sulfonation increases the water solubility of most compounds, and therefore their renal excretion, but it can also result in bioactivation to form active metabolites. Plays an important role in maintening steroid and lipid homeostasis. Plays a key role in bile acid metabolism. In addition, catalyzes the metabolic activation of potent carcinogenic polycyclic arylmethanols. The chain is Sulfotransferase 2A1 (Sult2a1) from Rattus norvegicus (Rat).